A 125-amino-acid polypeptide reads, in one-letter code: MSLLRHSLQALPALCLCVLVLACIGACQSEAHEGTPSPPPEQKTRRWNLVQSRMKELLEPAVTRTRDRWQWLWNLSILRGFIQTYYDDHLRDLGPRTKTWLLESKDTLLNKTYSLCPRLLCTDKN.

The N-terminal stretch at 1-27 is a signal peptide; that stretch reads MSLLRHSLQALPALCLCVLVLACIGAC.

Belongs to the apolipoprotein C4 family.

It is found in the secreted. May participate in lipoprotein metabolism. The polypeptide is Apolipoprotein C-IV (APOC4) (Ateles geoffroyi (Black-handed spider monkey)).